Reading from the N-terminus, the 648-residue chain is ATP-dependent zinc metalloprotease FtsH 4 (648 aa).

The Cytoplasmic portion of the chain corresponds to 1–6 (MKQSHK). A helical transmembrane segment spans residues 7 to 27 (TLLLWVLLIMMFLAIWQFLSP). The Periplasmic portion of the chain corresponds to 28–111 (DSRPATQVAF…VFFEKEDTSP (84 aa)). A helical membrane pass occupies residues 112 to 132 (FWPGAIMYLLPTVFLLVMFYL). The Cytoplasmic segment spans residues 133–648 (FMRQLQAGGG…FGTPKPAPST (516 aa)). 205–212 (GPPGTGKT) lines the ATP pocket. H427 contributes to the Zn(2+) binding site. E428 is an active-site residue. Zn(2+)-binding residues include H431 and D504. The disordered stretch occupies residues 622–648 (YSDRDRAAKEKRRAASIFGTPKPAPST).

In the central section; belongs to the AAA ATPase family. It in the C-terminal section; belongs to the peptidase M41 family. As to quaternary structure, homohexamer. Zn(2+) serves as cofactor.

It localises to the cell inner membrane. Acts as a processive, ATP-dependent zinc metallopeptidase for both cytoplasmic and membrane proteins. Plays a role in the quality control of integral membrane proteins. The sequence is that of ATP-dependent zinc metalloprotease FtsH 4 from Sorangium cellulosum (strain So ce56) (Polyangium cellulosum (strain So ce56)).